The following is a 917-amino-acid chain: Coiled-coil domain-containing protein 186 (917 aa).

Disordered stretches follow at residues 1–52 (MKIR…SGDE), 97–118 (SCAN…PGGD), and 701–769 (TQRR…SVAV). Residues 33-44 (TTEKTSELRDDS) show a composition bias toward basic and acidic residues. A coiled-coil region spans residues 220–736 (RYLQQELTVK…TENGNHDKDI (517 aa)). Basic and acidic residues predominate over residues 722 to 736 (RKLEQTENGNHDKDI). The span at 737–748 (SSMGSRSSSSGS) shows a compositional bias: low complexity. At serine 759 the chain carries Phosphoserine. 2 coiled-coil regions span residues 778–822 (AMLI…IQSY) and 874–913 (KLQA…LEQR).

Expressed in postnatal germ cells.

The polypeptide is Coiled-coil domain-containing protein 186 (Ccdc186) (Mus musculus (Mouse)).